The primary structure comprises 274 residues: Penicillin-insensitive murein endopeptidase (274 aa).

The N-terminal stretch at 1–19 (MNKTAIALLALLASSASLA) is a signal peptide. 3 cysteine pairs are disulfide-bonded: cysteine 44–cysteine 265, cysteine 187–cysteine 235, and cysteine 216–cysteine 223. Residues histidine 110, histidine 113, aspartate 120, aspartate 147, histidine 150, and histidine 211 each contribute to the Zn(2+) site. The interval 227-274 (PLPPPGDGCGAELQSWFEPPKPGTTKPEKKTPPPLPPSCQALLDEHVI) is disordered.

It belongs to the peptidase M74 family. Dimer. Zn(2+) is required as a cofactor.

It localises to the periplasm. In terms of biological role, murein endopeptidase that cleaves the D-alanyl-meso-2,6-diamino-pimelyl amide bond that connects peptidoglycan strands. Likely plays a role in the removal of murein from the sacculus. The sequence is that of Penicillin-insensitive murein endopeptidase from Escherichia coli O6:K15:H31 (strain 536 / UPEC).